Consider the following 604-residue polypeptide: Putative O-acetyltransferase SAR0937 (604 aa).

The next 11 helical transmembrane spans lie at 15 to 35, 43 to 63, 85 to 105, 150 to 170, 176 to 196, 212 to 232, 240 to 260, 267 to 287, 310 to 330, 332 to 352, and 377 to 397; these read YMPG…IYHL, GFLG…SLLL, LLPA…LLKS, AIEE…LLTI, IGFI…FIYS, LQTL…KLKN, YVID…FFII, IYDG…ASVV, YSLY…YVDG, IPVY…ELSY, and FIRM…LVGA. Active-site residues include S459, D581, and H584.

This sequence belongs to the acyltransferase 3 family.

The protein resides in the cell membrane. This is Putative O-acetyltransferase SAR0937 from Staphylococcus aureus (strain MRSA252).